The sequence spans 409 residues: Ubiquitin-associated domain-containing protein 1 (409 aa).

N-acetylmethionine is present on methionine 1. The Ubiquitin-like domain occupies 14–98 (LRLHICAADG…LLLIKKRVPS (85 aa)). Residues 101–122 (PKMADVSAEEKKKQEQKAPDKD) form a disordered region. Over residues 108–122 (AEEKKKQEQKAPDKD) the composition is skewed to basic and acidic residues. Positions 187–231 (DEDERVDETALRQLTEMGFPESRASKALRLNHMSVPQAMEWLIEH) constitute a UBA 1 domain. Residues 239-273 (TPLPGHAAQAGASAAATTSSTSSEAAVGTSVEDEE) are disordered. The span at 245 to 268 (AAQAGASAAATTSSTSSEAAVGTS) shows a compositional bias: low complexity. The region spanning 292–332 (RADARAVISLMEMGFDEKEVIDALRVNNNQQNAACEWLLGD) is the UBA 2 domain. Residues 357-396 (NPVVQLGLTNPKTLLAFEDMLENPLNSTQWMNDPETGPVM) enclose the STI1 domain.

As to quaternary structure, component of the KPC complex composed of RNF123/KPC1 and UBAC1/KPC2. Interacts (via ubiquitin-like domain) with RNF123. Interacts (via ubiquitin-like and UBA domains) with the proteasome via its N-terminal domain.

The protein resides in the cytoplasm. It participates in protein modification; protein ubiquitination. Functionally, non-catalytic component of the KPC complex, a E3 ubiquitin-protein ligase complex that mediates polyubiquitination of target proteins, such as CDKN1B and NFKB1. The KPC complex catalyzes polyubiquitination and proteasome-mediated degradation of CDKN1B during G1 phase of the cell cycle. The KPC complex also acts as a key regulator of the NF-kappa-B signaling by promoting maturation of the NFKB1 component of NF-kappa-B by catalyzing ubiquitination of the NFKB1 p105 precursor. Within the KPC complex, UBAC1 acts as an adapter that promotes the transfer of target proteins that have been polyubiquitinated by RNF123/KPC1 to the 26S proteasome. The protein is Ubiquitin-associated domain-containing protein 1 (Ubac1) of Mus musculus (Mouse).